The following is a 218-amino-acid chain: Pyrrolidone-carboxylate peptidase (218 aa).

Active-site residues include Glu81, Cys144, and His169.

This sequence belongs to the peptidase C15 family. In terms of assembly, homotetramer.

It localises to the cytoplasm. It catalyses the reaction Release of an N-terminal pyroglutamyl group from a polypeptide, the second amino acid generally not being Pro.. Removes 5-oxoproline from various penultimate amino acid residues except L-proline. The sequence is that of Pyrrolidone-carboxylate peptidase (pcp) from Deinococcus radiodurans (strain ATCC 13939 / DSM 20539 / JCM 16871 / CCUG 27074 / LMG 4051 / NBRC 15346 / NCIMB 9279 / VKM B-1422 / R1).